A 150-amino-acid polypeptide reads, in one-letter code: Globin-1 (150 aa).

Residues 11 to 150 (ALTAAEKATI…MICILLRSSY (140 aa)) enclose the Globin domain. Positions 74 and 106 each coordinate heme b.

This sequence belongs to the globin family. As to quaternary structure, monomer.

In Petromyzon marinus (Sea lamprey), this protein is Globin-1.